Consider the following 235-residue polypeptide: MAKLTKRMRVIREKVDATKQYDINEAISLLKELATAKFVESVDVAVNLGIDARKSDQNVRGATVLPHGTGRSVRVAVFTQGANAEAAKAAGAELVGMEDLAEQIKKGEMNFDVVIASPDAMRVVGQLGQVLGPRGLMPNPKVGTVTPNVAEAVKNAKAGQVRYRNDKNGIIHTTIGKVDFDADKLKENLEALLVALKKAKPTQAKGVYIKKVSISTTMGAGVAVDQSGLTATVAN.

The protein belongs to the universal ribosomal protein uL1 family. Part of the 50S ribosomal subunit.

Its function is as follows. Binds directly to 23S rRNA. The L1 stalk is quite mobile in the ribosome, and is involved in E site tRNA release. In terms of biological role, protein L1 is also a translational repressor protein, it controls the translation of the L11 operon by binding to its mRNA. The polypeptide is Large ribosomal subunit protein uL1 (Citrobacter koseri (strain ATCC BAA-895 / CDC 4225-83 / SGSC4696)).